A 157-amino-acid polypeptide reads, in one-letter code: Glutathione peroxidase (157 aa).

Residue Cys-35 is part of the active site.

It belongs to the glutathione peroxidase family.

The enzyme catalyses 2 glutathione + H2O2 = glutathione disulfide + 2 H2O. In Lactococcus lactis subsp. cremoris (strain MG1363), this protein is Glutathione peroxidase (gpo).